The chain runs to 256 residues: 5'-nucleotidase SurE (256 aa).

A divalent metal cation is bound by residues D8, D9, S40, and N94.

The protein belongs to the SurE nucleotidase family. The cofactor is a divalent metal cation.

The protein resides in the cytoplasm. The enzyme catalyses a ribonucleoside 5'-phosphate + H2O = a ribonucleoside + phosphate. Its function is as follows. Nucleotidase that shows phosphatase activity on nucleoside 5'-monophosphates. This chain is 5'-nucleotidase SurE, found in Wolbachia pipientis subsp. Culex pipiens (strain wPip).